The chain runs to 242 residues: Ethanolamine ammonia-lyase small subunit (242 aa).

Positions 155 and 176 each coordinate adenosylcob(III)alamin.

It belongs to the EutC family. The basic unit is a heterodimer which dimerizes to form tetramers. The heterotetramers trimerize; 6 large subunits form a core ring with 6 small subunits projecting outwards. It depends on adenosylcob(III)alamin as a cofactor.

The protein localises to the bacterial microcompartment. It carries out the reaction ethanolamine = acetaldehyde + NH4(+). Its pathway is amine and polyamine degradation; ethanolamine degradation. In terms of biological role, catalyzes the deamination of various vicinal amino-alcohols to oxo compounds. Allows this organism to utilize ethanolamine as the sole source of nitrogen and carbon in the presence of external vitamin B12. The chain is Ethanolamine ammonia-lyase small subunit from Clostridium acetobutylicum (strain ATCC 824 / DSM 792 / JCM 1419 / IAM 19013 / LMG 5710 / NBRC 13948 / NRRL B-527 / VKM B-1787 / 2291 / W).